The primary structure comprises 1050 residues: Self-sufficient cytochrome P450 monooxygenase CYP505E5 (1050 aa).

Cys405 is a binding site for heme. The interval 461–495 is disordered; it reads TATGLSRRSMLVARDGSSEESSNHPAEARGDHAPA. A Flavodoxin-like domain is found at 500-641; that stretch reads VSFFYGSNSG…DLEAWEETSL (142 aa). FMN-binding positions include 506–510 and 585–617; these read SNSGT and VFGC…TRLA. The region spanning 679 to 907 is the FAD-binding FR-type domain; the sequence is KGLIEAKVTA…RPAKETFHLP (229 aa).

It in the N-terminal section; belongs to the cytochrome P450 family. FAD serves as cofactor. The cofactor is FMN. Requires heme as cofactor.

It catalyses the reaction 2 oxidized [cytochrome P450] + NADPH = 2 reduced [cytochrome P450] + NADP(+) + H(+). It carries out the reaction an organic molecule + reduced [NADPH--hemoprotein reductase] + O2 = an alcohol + oxidized [NADPH--hemoprotein reductase] + H2O + H(+). The enzyme catalyses dodecanoate + reduced [NADPH--hemoprotein reductase] + O2 = 5-hydroxydodecanoate + oxidized [NADPH--hemoprotein reductase] + H2O + H(+). The catalysed reaction is tetradecanoate + reduced [NADPH--hemoprotein reductase] + O2 = 7-hydroxytetradecanoate + oxidized [NADPH--hemoprotein reductase] + H2O + H(+). It catalyses the reaction dodecan-1-ol + reduced [NADPH--hemoprotein reductase] + O2 = 1,5-dodecanediol + oxidized [NADPH--hemoprotein reductase] + H2O + H(+). It carries out the reaction dodecan-1-ol + reduced [NADPH--hemoprotein reductase] + O2 = 1,4-dodecanediol + oxidized [NADPH--hemoprotein reductase] + H2O + H(+). The enzyme catalyses dodecan-1-ol + reduced [NADPH--hemoprotein reductase] + O2 = 1,6-dodecanediol + oxidized [NADPH--hemoprotein reductase] + H2O + H(+). Its function is as follows. Self-sufficient cytochrome P450 monooxygenase that catalyzes the regioselective in-chain hydroxylation of alkanes, fatty alcohols, and fatty acids at the omega-7 position. Performs hydroxylation of C10-C16 n-alkanes and C12 and C14 fatty alcohols; and thereby enables the one step biocatalytic synthesis of rare alcohols such as 5-dodecanol and 7-tetradecanol. Converts 1-dodecanol into 1,5-dodecanediol as major product with very little sub-terminally hydroxylated products with the 1,4-dodecanediol and 1,6-dodecanediol more abundant. Converts dodecanoic acid to 5-hydroxydodecanoic acid which can be further converted into delta-dodecalactone by lactonization of the 5-hydroxy acid at low pH. Also gives sub-terminal hydroxylation of dodecanoic acid with 9-hydroxydodecanoic acid being the second most abundant product. The chain is Self-sufficient cytochrome P450 monooxygenase CYP505E5 from Aspergillus kawachii (strain NBRC 4308) (White koji mold).